Here is a 592-residue protein sequence, read N- to C-terminus: Cell division protein FtsZ (592 aa).

GTP contacts are provided by residues 24-28, 111-113, Glu-142, Arg-146, and Asp-190; these read GGGGN and GTG. Positions 333 to 362 are disordered; sequence KFQKSVSSVRKNDSGINQTASHPQSSQLRS.

Belongs to the FtsZ family. Homodimer. Polymerizes to form a dynamic ring structure in a strictly GTP-dependent manner. Interacts directly with several other division proteins.

The protein localises to the cytoplasm. Essential cell division protein that forms a contractile ring structure (Z ring) at the future cell division site. The regulation of the ring assembly controls the timing and the location of cell division. One of the functions of the FtsZ ring is to recruit other cell division proteins to the septum to produce a new cell wall between the dividing cells. Binds GTP and shows GTPase activity. The sequence is that of Cell division protein FtsZ from Bartonella bacilliformis.